Consider the following 82-residue polypeptide: U16-lycotoxin-Ls1a (82 aa).

A signal peptide spans 1-22 (MSPKVQALLLLVGLITFLAVHA). Positions 23-34 (EEELSETVESER) are excised as a propeptide. Cystine bridges form between cysteine 36/cysteine 51, cysteine 43/cysteine 56, cysteine 50/cysteine 67, and cysteine 58/cysteine 65.

It belongs to the neurotoxin 02 (plectoxin) family. 04 (U16-lycotoxin) subfamily. In terms of tissue distribution, expressed by the venom gland.

It localises to the secreted. This Lycosa singoriensis (Wolf spider) protein is U16-lycotoxin-Ls1a.